The chain runs to 118 residues: Ribulose bisphosphate carboxylase small subunit (118 aa).

This sequence belongs to the RuBisCO small chain family. Heterohexadecamer of 8 large and 8 small subunits.

The protein resides in the carboxysome. Its function is as follows. RuBisCO catalyzes two reactions: the carboxylation of D-ribulose 1,5-bisphosphate, the primary event in carbon dioxide fixation, as well as the oxidative fragmentation of the pentose substrate in the photorespiration process. Both reactions occur simultaneously and in competition at the same active site. Although the small subunit is not catalytic it is essential for maximal activity. In Thermosynechococcus vestitus (strain NIES-2133 / IAM M-273 / BP-1), this protein is Ribulose bisphosphate carboxylase small subunit.